Consider the following 448-residue polypeptide: tRNA wybutosine-synthesizing protein 2 homolog (448 aa).

Residues serine 218, lysine 225, glutamate 265, and 293–294 (DN) each bind S-adenosyl-L-methionine.

This sequence belongs to the class I-like SAM-binding methyltransferase superfamily. TRM5/TYW2 family.

The catalysed reaction is 4-demethylwyosine(37) in tRNA(Phe) + S-adenosyl-L-methionine = 4-demethyl-7-[(3S)-3-amino-3-carboxypropyl]wyosine(37) in tRNA(Phe) + S-methyl-5'-thioadenosine + H(+). It participates in tRNA modification; wybutosine-tRNA(Phe) biosynthesis. Functionally, S-adenosyl-L-methionine-dependent transferase that acts as a component of the wybutosine biosynthesis pathway. Wybutosine is a hyper modified guanosine with a tricyclic base found at the 3'-position adjacent to the anticodon of eukaryotic phenylalanine tRNA. Catalyzes the transfer of the alpha-amino-alpha-carboxypropyl (acp) group from S-adenosyl-L-methionine to the C-7 position of 4-demethylwyosine (imG-14) to produce wybutosine-86. The protein is tRNA wybutosine-synthesizing protein 2 homolog (TRMT12) of Macaca fascicularis (Crab-eating macaque).